Here is a 468-residue protein sequence, read N- to C-terminus: Acetyl-CoA decarbonylase/synthase complex subunit gamma (468 aa).

Residues 1-60 (MKINSPLEAYKYLPQTNCGECGEATCMAFASKLIDRSGKTSDCPPLIKEKKFAKKLAELD) form the 4Fe-4S domain. [4Fe-4S] cluster is bound by residues cysteine 18, cysteine 21, cysteine 26, and cysteine 43.

Heterodimer of delta and gamma chains. The ACDS complex is made up of alpha, epsilon, beta, gamma and delta chains with a probable stoichiometry of (alpha(2)epsilon(2))(4)-beta(8)-(gamma(1)delta(1))(8). The cofactor is corrinoid. [4Fe-4S] cluster serves as cofactor.

It catalyses the reaction 5,6,7,8-tetrahydrosarcinapterin + methyl-Co(III)-[corrinoid Fe-S protein] = 5-methyltetrahydrosarcinapterin + Co(I)-[corrinoid Fe-S protein] + H(+). It participates in one-carbon metabolism; methanogenesis from acetate. Its function is as follows. Part of a complex that catalyzes the reversible cleavage of acetyl-CoA, allowing growth on acetate as sole source of carbon and energy. The chain is Acetyl-CoA decarbonylase/synthase complex subunit gamma from Methanosarcina acetivorans (strain ATCC 35395 / DSM 2834 / JCM 12185 / C2A).